The chain runs to 662 residues: Junctophilin-1 (662 aa).

The Cytoplasmic portion of the chain corresponds to 1–640 (MTGGRFDFDD…EREANSGPNS (640 aa)). MORN repeat units follow at residues 14 to 36 (YCGG…KGQG), 38 to 59 (YSGS…SGNT), 60 to 82 (YQGY…KWMY), 106 to 128 (YEGT…DGGT), and 129 to 151 (YQGQ…PYGM). 3 positions are modified to phosphoserine: Ser-157, Ser-216, and Ser-220. The segment at 228–247 (SKSSISSKRSSVRSDAAMSR) is disordered. MORN repeat units lie at residues 281 to 303 (YMGE…NGMK) and 304 to 326 (YEGE…DGSK). Positions 432–443 (VDAKENPEEKVP) are enriched in basic and acidic residues. A disordered region spans residues 432–634 (VDAKENPEEK…DSCPSMEREA (203 aa)). Thr-448 carries the phosphothreonine modification. The residue at position 452 (Ser-452) is a Phosphoserine. Thr-461 carries the post-translational modification Phosphothreonine. Ser-465, Ser-469, and Ser-475 each carry phosphoserine. The segment covering 584 to 599 (KPSPNKWSPPKSVTKP) has biased composition (low complexity). Positions 600–614 (VAKESKAEPKAKKSE) are enriched in basic and acidic residues. A helical; Anchor for type IV membrane protein membrane pass occupies residues 641–661 (VMIVLVMLLNIGLAILFVHFL).

This sequence belongs to the junctophilin family.

It is found in the cell membrane. The protein resides in the endoplasmic reticulum membrane. It localises to the sarcoplasmic reticulum membrane. Junctophilins contribute to the formation of junctional membrane complexes (JMCs) which link the plasma membrane with the endoplasmic or sarcoplasmic reticulum in excitable cells. Provides a structural foundation for functional cross-talk between the cell surface and intracellular calcium release channels. JPH1 contributes to the construction of the skeletal muscle triad by linking the t-tubule (transverse-tubule) and SR (sarcoplasmic reticulum) membranes. The protein is Junctophilin-1 (JPH1) of Oryctolagus cuniculus (Rabbit).